Consider the following 195-residue polypeptide: Protein GrpE (195 aa).

It belongs to the GrpE family. Homodimer.

It is found in the cytoplasm. Its function is as follows. Participates actively in the response to hyperosmotic and heat shock by preventing the aggregation of stress-denatured proteins, in association with DnaK and GrpE. It is the nucleotide exchange factor for DnaK and may function as a thermosensor. Unfolded proteins bind initially to DnaJ; upon interaction with the DnaJ-bound protein, DnaK hydrolyzes its bound ATP, resulting in the formation of a stable complex. GrpE releases ADP from DnaK; ATP binding to DnaK triggers the release of the substrate protein, thus completing the reaction cycle. Several rounds of ATP-dependent interactions between DnaJ, DnaK and GrpE are required for fully efficient folding. The sequence is that of Protein GrpE from Blochmanniella pennsylvanica (strain BPEN).